The sequence spans 448 residues: Bifunctional protein GlmU (448 aa).

A pyrophosphorylase region spans residues 1–229 (MNNHTLNIII…NDEIQGINNL (229 aa)). Residues 11 to 14 (LAAG), lysine 25, glutamine 76, 81 to 82 (GT), 103 to 105 (YGD), glycine 140, glutamate 154, asparagine 169, and asparagine 227 contribute to the UDP-N-acetyl-alpha-D-glucosamine site. Aspartate 105 provides a ligand contact to Mg(2+). Residue asparagine 227 coordinates Mg(2+). Residues 230-250 (LQLVRAEKIYQKQQAKLLLLS) are linker. Residues 251–448 (GIMIYNPSNF…NEKKQIHKKL (198 aa)) form an N-acetyltransferase region. UDP-N-acetyl-alpha-D-glucosamine is bound at residue lysine 351. The active-site Proton acceptor is histidine 363. The UDP-N-acetyl-alpha-D-glucosamine site is built by tyrosine 366 and asparagine 377. Acetyl-CoA contacts are provided by residues alanine 380, 386 to 387 (NY), serine 405, and alanine 423.

In the N-terminal section; belongs to the N-acetylglucosamine-1-phosphate uridyltransferase family. The protein in the C-terminal section; belongs to the transferase hexapeptide repeat family. In terms of assembly, homotrimer. Mg(2+) serves as cofactor.

The protein localises to the cytoplasm. The enzyme catalyses alpha-D-glucosamine 1-phosphate + acetyl-CoA = N-acetyl-alpha-D-glucosamine 1-phosphate + CoA + H(+). It catalyses the reaction N-acetyl-alpha-D-glucosamine 1-phosphate + UTP + H(+) = UDP-N-acetyl-alpha-D-glucosamine + diphosphate. It functions in the pathway nucleotide-sugar biosynthesis; UDP-N-acetyl-alpha-D-glucosamine biosynthesis; N-acetyl-alpha-D-glucosamine 1-phosphate from alpha-D-glucosamine 6-phosphate (route II): step 2/2. It participates in nucleotide-sugar biosynthesis; UDP-N-acetyl-alpha-D-glucosamine biosynthesis; UDP-N-acetyl-alpha-D-glucosamine from N-acetyl-alpha-D-glucosamine 1-phosphate: step 1/1. The protein operates within bacterial outer membrane biogenesis; LPS lipid A biosynthesis. Its function is as follows. Catalyzes the last two sequential reactions in the de novo biosynthetic pathway for UDP-N-acetylglucosamine (UDP-GlcNAc). The C-terminal domain catalyzes the transfer of acetyl group from acetyl coenzyme A to glucosamine-1-phosphate (GlcN-1-P) to produce N-acetylglucosamine-1-phosphate (GlcNAc-1-P), which is converted into UDP-GlcNAc by the transfer of uridine 5-monophosphate (from uridine 5-triphosphate), a reaction catalyzed by the N-terminal domain. The chain is Bifunctional protein GlmU from Buchnera aphidicola subsp. Baizongia pistaciae (strain Bp).